A 254-amino-acid chain; its full sequence is Translation initiation factor 2 subunit alpha (254 aa).

Residues 10–81 (GDLVVVKITE…ERKNVDLSLK (72 aa)) enclose the S1 motif domain.

This sequence belongs to the eIF-2-alpha family. In terms of assembly, heterotrimer composed of an alpha, a beta and a gamma chain.

Its function is as follows. eIF-2 functions in the early steps of protein synthesis by forming a ternary complex with GTP and initiator tRNA. In Thermoplasma volcanium (strain ATCC 51530 / DSM 4299 / JCM 9571 / NBRC 15438 / GSS1), this protein is Translation initiation factor 2 subunit alpha.